The sequence spans 249 residues: MSHTLTKLDLPTLQTELENATAQQIITWAAQTFGPGLVMSTSFGIQAAVMLHLVTSIVPNIPVIWIDTGYLPLETYQFADQLTGRLQLNLKVYQSPLSPARMEALYGKLWQQKDVESLNRYDQIRKVEPMQRALKELEAIAWLTGLRRDQTRHRQNLKPVDLQGNQYKVLPILDWNSKMVYEYLTAHDLPYHPFFDQGYVSVGDWHSSRPLMAHDEDERDTRFHGLKQECGLHLPLSPEAGQSLDSSAL.

Cys-230 serves as the catalytic Nucleophile; cysteine thiosulfonate intermediate.

The protein belongs to the PAPS reductase family. CysH subfamily.

The protein resides in the cytoplasm. It carries out the reaction [thioredoxin]-disulfide + sulfite + adenosine 3',5'-bisphosphate + 2 H(+) = [thioredoxin]-dithiol + 3'-phosphoadenylyl sulfate. It participates in sulfur metabolism; hydrogen sulfide biosynthesis; sulfite from sulfate: step 3/3. Its function is as follows. Catalyzes the formation of sulfite from phosphoadenosine 5'-phosphosulfate (PAPS) using thioredoxin as an electron donor. The polypeptide is Phosphoadenosine 5'-phosphosulfate reductase (Synechocystis sp. (strain ATCC 27184 / PCC 6803 / Kazusa)).